The primary structure comprises 289 residues: Cell division protein ZipA (289 aa).

A topological domain (periplasmic) is located at residue methionine 1. The helical transmembrane segment at 2–22 (DIGLREWLIVIGLIVIAGILF) threads the bilayer. At 23 to 289 (DGWRRMRGGK…HERRSLMQKR (267 aa)) the chain is on the cytoplasmic side. The disordered stretch occupies residues 65–141 (HREPSFDEQD…KEREKAPAVA (77 aa)). The span at 81–99 (RETKERKGGKRQEEPRQGD) shows a compositional bias: basic and acidic residues. Positions 100 to 114 (LDLDEGLALEADPSD) are enriched in acidic residues.

It belongs to the ZipA family. As to quaternary structure, interacts with FtsZ via their C-terminal domains.

The protein resides in the cell inner membrane. In terms of biological role, essential cell division protein that stabilizes the FtsZ protofilaments by cross-linking them and that serves as a cytoplasmic membrane anchor for the Z ring. Also required for the recruitment to the septal ring of downstream cell division proteins. This Pseudomonas aeruginosa (strain UCBPP-PA14) protein is Cell division protein ZipA.